Consider the following 243-residue polypeptide: Exosome complex component Rrp41 (243 aa).

Belongs to the RNase PH family. Rrp41 subfamily. In terms of assembly, component of the archaeal exosome complex. Forms a hexameric ring-like arrangement composed of 3 Rrp41-Rrp42 heterodimers. The hexameric ring associates with a trimer of Rrp4 and/or Csl4 subunits.

It localises to the cytoplasm. Catalytic component of the exosome, which is a complex involved in RNA degradation. Has 3'-&gt;5' exoribonuclease activity. Can also synthesize heteromeric RNA-tails. The polypeptide is Exosome complex component Rrp41 (Sulfurisphaera tokodaii (strain DSM 16993 / JCM 10545 / NBRC 100140 / 7) (Sulfolobus tokodaii)).